A 397-amino-acid polypeptide reads, in one-letter code: Argininosuccinate synthase (397 aa).

9-17 (AYSGGLDTS) is a binding site for ATP. An L-citrulline-binding site is contributed by Tyr87. Gly117 provides a ligand contact to ATP. Residues Thr119, Asn123, and Asp124 each coordinate L-aspartate. Asn123 is a binding site for L-citrulline. The L-citrulline site is built by Arg127, Ser175, Ser184, Glu257, and Tyr269.

It belongs to the argininosuccinate synthase family. Type 1 subfamily. As to quaternary structure, homotetramer.

It localises to the cytoplasm. It carries out the reaction L-citrulline + L-aspartate + ATP = 2-(N(omega)-L-arginino)succinate + AMP + diphosphate + H(+). Its pathway is amino-acid biosynthesis; L-arginine biosynthesis; L-arginine from L-ornithine and carbamoyl phosphate: step 2/3. This is Argininosuccinate synthase from Dictyoglomus thermophilum (strain ATCC 35947 / DSM 3960 / H-6-12).